The primary structure comprises 204 residues: IMPACT family member YigZ (204 aa).

This sequence belongs to the IMPACT family. Monomer.

In Escherichia coli (strain K12), this protein is IMPACT family member YigZ (yigZ).